Here is a 543-residue protein sequence, read N- to C-terminus: Efflux pump mokI (543 aa).

A run of 13 helical transmembrane segments spans residues 30 to 50, 90 to 110, 125 to 145, 153 to 173, 185 to 205, 233 to 253, 261 to 281, 307 to 327, 340 to 360, 364 to 384, 394 to 416, 428 to 448, and 509 to 529; these read LVVT…SIIV, LLTL…GSAL, AVAG…LASA, LLIG…PLLG, CFYI…AIHI, LLGF…LEWG, SSVI…FGFW, LFLG…PIYF, VYML…GAII, GYYI…AGLV, AAWV…TPII, ALGI…FLTL, and VGAS…GLIW.

Belongs to the major facilitator superfamily. TCR/Tet family.

The protein localises to the membrane. Functionally, efflux pump; part of the gene cluster that mediates the biosynthesis of monakolin K, also known as lovastatin, and which acts as a potent competitive inhibitor of HMG-CoA reductase. In Monascus pilosus (Red mold), this protein is Efflux pump mokI.